Reading from the N-terminus, the 996-residue chain is Filament-like plant protein 5 (996 aa).

Residues 1-20 (MEGRGWPWKRKSSDKATTEK) are disordered. Coiled coils occupy residues 59–94 (THMSRMEDQVKLFEVQVKDLKEKLTLAHSEINTKES), 133–248 (TAED…KYDL), 280–301 (VKKIAKLEAECHRLRGLLRKKL), and 359–387 (LTRRTLEMEEEIQTLKEHLSARNNELQVS). Disordered regions lie at residues 409-482 (NNDK…SSSR) and 496-534 (VGSDPDGANSASKSSNSVCSRRSVEKQSSSKSSEPDEDT). Residues 417-428 (SNSRNLSESLSS) are compositionally biased toward low complexity. The segment covering 471–482 (VNGSSKPRSSSR) has biased composition (polar residues). Residues 503–527 (ANSASKSSNSVCSRRSVEKQSSSKS) show a composition bias toward low complexity. Coiled coils occupy residues 601–622 (QNSEKEQKNTKQQDLEAAVANI), 737–841 (DSSC…FTTE), and 876–906 (NQEKDIVSATEKLAACQETIHLLSQQLQSLQ). The disordered stretch occupies residues 962 to 996 (IMKSSSVSSSSKEDNEKHTRGLGRFFSSKSKNSAR).

The protein belongs to the FPP family. In terms of assembly, interacts with WPP/MAF proteins.

This Arabidopsis thaliana (Mouse-ear cress) protein is Filament-like plant protein 5 (FPP5).